Reading from the N-terminus, the 235-residue chain is Octanoyltransferase (235 aa).

The region spanning 30 to 214 (NELEDTLLLL…YFGKVFGAKF (185 aa)) is the BPL/LPL catalytic domain. Substrate contacts are provided by residues 75–82 (RGGDVTYH), 144–146 (AIG), and 157–159 (GFA). Residue Cys175 is the Acyl-thioester intermediate of the active site.

It belongs to the LipB family.

Its subcellular location is the cytoplasm. The catalysed reaction is octanoyl-[ACP] + L-lysyl-[protein] = N(6)-octanoyl-L-lysyl-[protein] + holo-[ACP] + H(+). It functions in the pathway protein modification; protein lipoylation via endogenous pathway; protein N(6)-(lipoyl)lysine from octanoyl-[acyl-carrier-protein]: step 1/2. In terms of biological role, catalyzes the transfer of endogenously produced octanoic acid from octanoyl-acyl-carrier-protein onto the lipoyl domains of lipoate-dependent enzymes. Lipoyl-ACP can also act as a substrate although octanoyl-ACP is likely to be the physiological substrate. The polypeptide is Octanoyltransferase (Caldicellulosiruptor saccharolyticus (strain ATCC 43494 / DSM 8903 / Tp8T 6331)).